The following is a 251-amino-acid chain: ATP synthase subunit a (251 aa).

7 consecutive transmembrane segments (helical) span residues 28-48 (FTQS…IIAL), 63-80 (LVEI…EQIG), 86-106 (FFPF…LGLF), 115-135 (HVAV…AVAL), 154-176 (ALAP…SLSI), 195-215 (FMFL…LLPM), and 219-239 (VTLV…FAIL).

The protein belongs to the ATPase A chain family. In terms of assembly, F-type ATPases have 2 components, CF(1) - the catalytic core - and CF(0) - the membrane proton channel. CF(1) has five subunits: alpha(3), beta(3), gamma(1), delta(1), epsilon(1). CF(0) has three main subunits: a(1), b(2) and c(9-12). The alpha and beta chains form an alternating ring which encloses part of the gamma chain. CF(1) is attached to CF(0) by a central stalk formed by the gamma and epsilon chains, while a peripheral stalk is formed by the delta and b chains.

The protein resides in the cell inner membrane. Functionally, key component of the proton channel; it plays a direct role in the translocation of protons across the membrane. The sequence is that of ATP synthase subunit a from Granulibacter bethesdensis (strain ATCC BAA-1260 / CGDNIH1).